Here is a 424-residue protein sequence, read N- to C-terminus: MRLLLCLIFLVFVFNFALSTVHFKDTFDNDWESRWVVSDWHKEDGKSGKLVHTAGKWFGDENQKGIQTSEDARFYAVSAKFPSFSNKGKDLVLQYTVKNEQKVDCGGSYIKLLPSKLDQSAFDGESEYSIMFGPDVCGASKRVHVILNYKGKNHLIKKEINKVETDQLTHQYTLVISPDNTYKVLVDNKEIQAGNLADDWELLPSKQIKDPKQSKPVDWVDVKEIDDPEDVKPAGHDDIPASIVDPEAVKPEDWNEEDDGEWEAPTIANPEYKGEWKAKKIPNPEYKGEWVHPLIDNPEYAEDNELYLFNDLGAIGFELWQVKSGSIFNNMIVTDSVEEAKDFSEKTFVANQEAEKKMFDDLEAAKAEERKKADEKLAAEKAAEKEAEEADEEEEEVAEEDLVKTDDKKEEVKKSTKKVDHDEL.

Residues 1–19 form the signal peptide; sequence MRLLLCLIFLVFVFNFALS. A disulfide bond links Cys105 and Cys137. An alpha-D-glucoside-binding residues include Tyr109, Lys111, Tyr128, and Asp135. A run of 7 repeats spans residues 191–202, 210–221, 227–238, 246–256, 260–270, 274–284, and 288–298. Positions 191–256 are 4 X 12 AA approximate repeats; the sequence is IQAGNLADDW…EAVKPEDWNE (66 aa). Residues 260 to 298 form a 3 X 11 AA approximate repeats region; that stretch reads GEWEAPTIANPEYKGEWKAKKIPNPEYKGEWVHPLIDNP. Glu318 contacts an alpha-D-glucoside. Positions 370–385 are enriched in basic and acidic residues; sequence RKKADEKLAAEKAAEK. A disordered region spans residues 370–424; the sequence is RKKADEKLAAEKAAEKEAEEADEEEEEVAEEDLVKTDDKKEEVKKSTKKVDHDEL. Acidic residues predominate over residues 386–400; sequence EAEEADEEEEEVAEE. Over residues 401-424 the composition is skewed to basic and acidic residues; the sequence is DLVKTDDKKEEVKKSTKKVDHDEL. The short motif at 421–424 is the Prevents secretion from ER element; that stretch reads HDEL.

The protein belongs to the calreticulin family.

The protein localises to the endoplasmic reticulum lumen. Its function is as follows. Molecular calcium-binding chaperone promoting folding, oligomeric assembly and quality control in the ER via the calreticulin/calnexin cycle. This lectin may interact transiently with almost all of the monoglucosylated glycoproteins that are synthesized in the ER. In Dictyostelium discoideum (Social amoeba), this protein is Calreticulin (crtA).